A 1187-amino-acid chain; its full sequence is RNA helicase Mov10l1 (1187 aa).

Residues 273–347 (RSKSCPGAAA…EPEPGGLIPP (75 aa)) are disordered. Basic and acidic residues-rich tracts occupy residues 296–307 (HHREDKTDEIPE) and 322–339 (ACKE…KQEP). 5 tandem repeats follow at residues 642–652 (TRNDSQSITNI), 653–663 (IRNDGQSITNV), 664–674 (TRNDGQPITKV), 675–685 (TRNNSQSITNI), and 686–696 (TRNDGQPITKN). A 5 X 11 AA tandem repeats of [TI]-R-N-[DN]-[GS]-Q-[SP]-I-T-[NK]-[IVN] region spans residues 642–696 (TRNDSQSITNIIRNDGQSITNVTRNDGQPITKVTRNNSQSITNITRNDGQPITKN). The interval 686–727 (TRNDGQPITKNKKTVKDQTKHTTEERHVGTTDQPEKASSTAE) is disordered. Residues 699–720 (TVKDQTKHTTEERHVGTTDQPE) show a composition bias toward basic and acidic residues. An ATP-binding site is contributed by 772 to 779 (GPPGTGKT). The DEAG box signature appears at 888 to 891 (DEAG).

It belongs to the DNA2/NAM7 helicase family. SDE3 subfamily. As to quaternary structure, interacts with PIWIL1. Interacts with PIWIL2. Interacts with PIWIL4. Interacts with HSPA2. Interacts with PLD6. As to expression, isoform 1: Specifically expressed in testis. Isoform 1: In testis, present in pachytene spermatocytes but absent in postmeiotic spermatids (at protein level). Isoform 2: Present in cardiomyocytes (at protein level). Isoform 2: Heart specific. Isoform 3: Heart specific and is specifically expressed in cardiac myocytes.

It localises to the cytoplasm. It carries out the reaction ATP + H2O = ADP + phosphate + H(+). ATP-dependent RNA helicase required during spermatogenesis to repress transposable elements and prevent their mobilization, which is essential for germline integrity. Acts via the piRNA metabolic process, which mediates the repression of transposable elements during meiosis by forming complexes composed of piRNAs and Piwi proteins and governs the methylation and subsequent repression of transposons. Involved in the primary piRNA metabolic process. Specifically binds to piRNA precursors and promotes the generation of intermediate piRNA processing fragments that are subsequently loaded to Piwi proteins. Acts via its ATP-dependent RNA helicase activity: displays 5'-3' RNA unwinding activity and probably mediates unwinding and funneling of single-stranded piRNA precursor transcripts to the endonuclease that catalyzes the first cleavage step of piRNA processing to generate piRNA intermediate fragments that are subsequently loaded to Piwi proteins. Functionally, may act downstream of MEF2C during heart formation. Acts as a cardiac-specific suppressor of cardiomyocyte hypertrophy and cell cycle progression, suggesting that it may suppress these processes through the regulation of CDKN1A. Such results however require additional evidence. This Mus musculus (Mouse) protein is RNA helicase Mov10l1.